The sequence spans 433 residues: 23S rRNA (uracil(1939)-C(5))-methyltransferase RlmD (433 aa).

The TRAM domain maps to 10 to 68; sequence RTTTRQIITVSVNDLDSFGQGVARHNGKTLFIPGLLPQENAEVTVTEDKKQYARAKVVR. 2 interaction with RNA regions span residues 23 to 40 and 58 to 63; these read DLDS…KTLF and KKQYAR. 4 residues coordinate [4Fe-4S] cluster: Cys81, Cys87, Cys90, and Cys162. The S-adenosyl-L-methionine site is built by Gln265, Phe294, Asn299, Glu315, Asn342, and Asp363. The Nucleophile role is filled by Cys389.

The protein belongs to the class I-like SAM-binding methyltransferase superfamily. RNA M5U methyltransferase family. RlmD subfamily.

The enzyme catalyses uridine(1939) in 23S rRNA + S-adenosyl-L-methionine = 5-methyluridine(1939) in 23S rRNA + S-adenosyl-L-homocysteine + H(+). Its function is as follows. Catalyzes the formation of 5-methyl-uridine at position 1939 (m5U1939) in 23S rRNA. The protein is 23S rRNA (uracil(1939)-C(5))-methyltransferase RlmD of Escherichia coli (strain K12).